A 106-amino-acid polypeptide reads, in one-letter code: Small ribosomal subunit protein mS33 (106 aa).

Position 2 is an N-acetylserine (Ser2). Residues 85–94 (LKKLRGKVKP) show a composition bias toward basic residues. Residues 85 to 106 (LKKLRGKVKPRKGEGKRAAKKK) form a disordered region. A compositionally biased stretch (basic and acidic residues) spans 95 to 106 (RKGEGKRAAKKK).

This sequence belongs to the mitochondrion-specific ribosomal protein mS33 family. As to quaternary structure, component of the mitochondrial ribosome small subunit (28S) which comprises a 12S rRNA and about 30 distinct proteins.

It localises to the mitochondrion. The polypeptide is Small ribosomal subunit protein mS33 (Bos taurus (Bovine)).